The sequence spans 199 residues: Superoxide dismutase [Mn] 2 (199 aa).

The Mn(2+) site is built by His28, His75, Asp157, and His161.

It belongs to the iron/manganese superoxide dismutase family. Mn(2+) is required as a cofactor.

The catalysed reaction is 2 superoxide + 2 H(+) = H2O2 + O2. Functionally, destroys superoxide anion radicals which are normally produced within the cells and which are toxic to biological systems. The polypeptide is Superoxide dismutase [Mn] 2 (sod2) (Haloferax volcanii (strain ATCC 29605 / DSM 3757 / JCM 8879 / NBRC 14742 / NCIMB 2012 / VKM B-1768 / DS2) (Halobacterium volcanii)).